A 492-amino-acid chain; its full sequence is NADH-quinone oxidoreductase subunit N (492 aa).

The next 14 membrane-spanning stretches (helical) occupy residues 18-38 (ILPM…NAFT), 45-65 (LNMF…LGLE), 80-100 (LSLV…FLAL), 108-128 (FQTA…QFMV), 133-153 (LLLM…LMAL), 167-187 (FTMG…FYLL), 209-229 (MLFA…VSLV), 250-270 (ISIV…GAFI), 277-297 (VEDI…LIAL), 305-325 (MLAY…FIHT), 333-353 (FVYW…LWLL), 381-401 (VAIL…FSVF), 415-435 (NHIL…FYYF), and 464-484 (MPIY…VFMM).

This sequence belongs to the complex I subunit 2 family. As to quaternary structure, NDH-1 is composed of 14 different subunits. Subunits NuoA, H, J, K, L, M, N constitute the membrane sector of the complex.

It localises to the cell inner membrane. It catalyses the reaction a quinone + NADH + 5 H(+)(in) = a quinol + NAD(+) + 4 H(+)(out). In terms of biological role, NDH-1 shuttles electrons from NADH, via FMN and iron-sulfur (Fe-S) centers, to quinones in the respiratory chain. The immediate electron acceptor for the enzyme in this species is believed to be ubiquinone. Couples the redox reaction to proton translocation (for every two electrons transferred, four hydrogen ions are translocated across the cytoplasmic membrane), and thus conserves the redox energy in a proton gradient. The polypeptide is NADH-quinone oxidoreductase subunit N (Helicobacter acinonychis (strain Sheeba)).